Here is a 698-residue protein sequence, read N- to C-terminus: Serotransferrin (698 aa).

A signal peptide spans 1–19 (MRLAVGALLVCAVLGLCLA). Transferrin-like domains lie at 25 to 347 (VRWC…NLRE) and 361 to 683 (VKWC…NLRK). 2 disulfides stabilise this stretch: Cys-28-Cys-67 and Cys-38-Cys-58. Dimethylated arginine is present on Arg-42. Residue Ser-51 is glycosylated (O-linked (GalNAc...) serine). 2 residues coordinate Fe(3+): Asp-82 and Tyr-114. Disulfide bonds link Cys-137/Cys-213, Cys-156/Cys-350, Cys-177/Cys-193, Cys-180/Cys-198, Cys-190/Cys-196, Cys-246/Cys-260, Cys-358/Cys-615, Cys-364/Cys-396, Cys-374/Cys-387, Cys-421/Cys-693, Cys-437/Cys-656, Cys-469/Cys-542, Cys-493/Cys-684, Cys-503/Cys-517, Cys-514/Cys-525, Cys-582/Cys-596, and Cys-634/Cys-639. Residues Thr-139, Arg-143, Ala-145, and Gly-146 each coordinate hydrogencarbonate. Tyr-207 contributes to the Fe(3+) binding site. His-268 contributes to the Fe(3+) binding site. The residue at position 389 (Ser-389) is a Phosphoserine; by FAM20C. Residue Asp-411 coordinates Fe(3+). N-linked (GlcNAc...) (complex) asparagine glycosylation is present at Asn-432. Tyr-445 lines the Fe(3+) pocket. Hydrogencarbonate contacts are provided by Thr-471, Arg-475, Ala-477, and Gly-478. N-linked (GlcNAc...) asparagine; atypical; partial glycosylation is present at Asn-491. A Fe(3+)-binding site is contributed by Tyr-536. Fe(3+) is bound at residue His-604. N-linked (GlcNAc...) (complex) asparagine glycosylation occurs at Asn-630. Phosphoserine; by FAM20C is present on Ser-685.

Belongs to the transferrin family. In terms of assembly, monomer. Part of a complex composed of SLC40A1/ferroportin, TF/transferrin and HEPH/hephaestin that transfers iron from cells to transferrin. (Microbial infection) Binds to Neisseria transferrin-binding protein A (tbpA or tbp1). Forms a large complex with TbpA and TbpB. As to quaternary structure, (Microbial infection) Binds to Neisseria transferrin-binding protein B (tbpb or tbp2). As to expression, expressed by the liver and secreted in plasma.

The protein localises to the secreted. Functionally, transferrins are iron binding transport proteins which can bind two Fe(3+) ions in association with the binding of an anion, usually bicarbonate. It is responsible for the transport of iron from sites of absorption and heme degradation to those of storage and utilization. Serum transferrin may also have a further role in stimulating cell proliferation. In terms of biological role, (Microbial infection) Serves as an iron source for Neisseria species, which capture the protein and extract its iron for their own use. (Microbial infection) Serves as an iron source for parasite T.brucei (strain 427), which capture TF via its own transferrin receptor ESAG6:ESAG7 and extract its iron for its own use. This Homo sapiens (Human) protein is Serotransferrin.